A 379-amino-acid polypeptide reads, in one-letter code: Botryococcene C-methyltransferase (379 aa).

Residues 17-37 (LLTWKGAAGLAAAVALGYIII) form a helical membrane-spanning segment.

Belongs to the class I-like SAM-binding methyltransferase superfamily. Erg6/SMT family.

The protein resides in the microsome membrane. It catalyses the reaction C30 botryococcene + 2 S-adenosyl-L-methionine = 3,20-dimethyl-1,2,21,22-tetradehydro-2,3,20,21-tetrahydrobotryococcene + 2 S-adenosyl-L-homocysteine + 2 H(+). Functionally, converts botryococcene to mono- and dimethyl derivatives, but not to tri- and tetramethylated products. Unable to methylate cycloartenol, zymosterol or lanosterol, but can also use squalene as substrate. Methylates both C-3 and C22 positions, but only C-3 position in monomethylated squalenes. In contrast, monomethylated botryococcene occured mainly at the C-20 position yielding showacene, but also at the C-3 position yielding isoshowacene. In Botryococcus braunii (Green alga), this protein is Botryococcene C-methyltransferase (TMT-3).